The following is a 190-amino-acid chain: Xanthine phosphoribosyltransferase (190 aa).

Positions 20 and 27 each coordinate xanthine. A 5-phospho-alpha-D-ribose 1-diphosphate-binding site is contributed by 128 to 132 (ANGHA). Lys-156 provides a ligand contact to xanthine.

Belongs to the purine/pyrimidine phosphoribosyltransferase family. Xpt subfamily. As to quaternary structure, homodimer.

The protein resides in the cytoplasm. It catalyses the reaction XMP + diphosphate = xanthine + 5-phospho-alpha-D-ribose 1-diphosphate. It functions in the pathway purine metabolism; XMP biosynthesis via salvage pathway; XMP from xanthine: step 1/1. Converts the preformed base xanthine, a product of nucleic acid breakdown, to xanthosine 5'-monophosphate (XMP), so it can be reused for RNA or DNA synthesis. The chain is Xanthine phosphoribosyltransferase from Pseudomonas aeruginosa (strain ATCC 15692 / DSM 22644 / CIP 104116 / JCM 14847 / LMG 12228 / 1C / PRS 101 / PAO1).